The following is a 479-amino-acid chain: Pre-glycoprotein polyprotein GP complex (479 aa).

Glycine 2 carries N-myristoyl glycine; by host lipidation. The Extracellular segment spans residues 2-17; it reads GQLISFFQDIPIFFEE. A helical transmembrane segment spans residues 18-32; it reads ALNVALAVVTLLAII. Residue lysine 33 is a topological domain, cytoplasmic. Residues 34 to 53 traverse the membrane as a helical segment; that stretch reads GIVNVWKSGILQLFVFLVLA. Extracellular loops occupy residues 54-58 and 59-418; these read GRSCS and FKVG…TLVD. A Zn(2+)-binding site is contributed by cysteine 57. 3 cysteine pairs are disulfide-bonded: cysteine 85–cysteine 221, cysteine 265–cysteine 278, and cysteine 287–cysteine 296. N-linked (GlcNAc...) asparagine; by host glycosylation is found at asparagine 88, asparagine 125, asparagine 174, asparagine 202, and asparagine 214. 5 N-linked (GlcNAc...) asparagine; by host glycosylation sites follow: asparagine 314, asparagine 351, asparagine 359, asparagine 376, and asparagine 381. An intrachain disulfide couples cysteine 350 to cysteine 371. A helical transmembrane segment spans residues 419 to 439; it reads LCFWSAIFFTTSLFLHLVGFP. Over 440-479 the chain is Cytoplasmic; it reads THRHIQGDPCPLPHRLDRNGACRCGRFQKLGKQVTWKRKH. Zn(2+) is bound by residues histidine 441, histidine 443, cysteine 449, histidine 453, cysteine 461, cysteine 463, and histidine 479.

This sequence belongs to the arenaviridae GPC protein family. Homotetramer; disulfide-linked. As to quaternary structure, homotetramer. GP2 homotetramers bind through ionic interactions with GP1 homotetramers to form the GP complex together with the stable signal peptide. The GP-C polyprotein interacts with the host protease MBTPS1/SKI-1 resulting in the polyprotein processing. Specific enzymatic cleavages in vivo yield mature proteins. GP-C polyprotein is cleaved in the endoplasmic reticulum by the host protease MBTPS1. Only cleaved glycoprotein is incorporated into virions. In terms of processing, the SSP remains stably associated with the GP complex following cleavage by signal peptidase and plays crucial roles in the trafficking of GP through the secretory pathway. Post-translationally, myristoylation is necessary for GP2-mediated fusion activity.

Its subcellular location is the virion membrane. It localises to the host endoplasmic reticulum membrane. The protein localises to the host Golgi apparatus membrane. It is found in the host cell membrane. In terms of biological role, interacts with the host receptor. Mediates virus attachment to host TFRC. This attachment induces virion internalization predominantly through clathrin-mediated endocytosis. Its function is as follows. Class I viral fusion protein that directs fusion of viral and host endosomal membranes, leading to delivery of the nucleocapsid into the cytoplasm. Membrane fusion is mediated by irreversible conformational changes induced upon acidification in the endosome. Functionally, stable signal peptide (SSP): cleaved and functions as a signal peptide. In addition, it is also retained as the third component of the GP complex. The SSP is required for efficient glycoprotein expression, post-translational maturation cleavage of GP1 and GP2, glycoprotein transport to the cell surface plasma membrane, formation of infectious virus particles, and acid pH-dependent glycoprotein-mediated cell fusion. This chain is Pre-glycoprotein polyprotein GP complex, found in Homo sapiens (Human).